A 158-amino-acid polypeptide reads, in one-letter code: FUN14 domain-containing protein 1 (158 aa).

The YXXL motif lies at 21 to 24; it reads YEVV. 2 consecutive transmembrane segments (helical) span residues 51–70 and 77–98; these read YSVTTQLVMGGLTGWCAGYL and IAATAVGGGFLLLQIANHSGYV.

Belongs to the FUN14 family.

It is found in the mitochondrion outer membrane. Acts as an activator of hypoxia-induced mitophagy, an important mechanism for mitochondrial quality control. This Tetraodon nigroviridis (Spotted green pufferfish) protein is FUN14 domain-containing protein 1 (fundc1).